Consider the following 147-residue polypeptide: Ribonuclease H (147 aa).

The RNase H type-1 domain maps to 1–142 (MREVIIYTDG…CDELARAAIA (142 aa)). The Mg(2+) site is built by Asp9, Glu47, Asp69, and Asp134.

The protein belongs to the RNase H family. Monomer. Mg(2+) serves as cofactor.

The protein resides in the cytoplasm. The enzyme catalyses Endonucleolytic cleavage to 5'-phosphomonoester.. Endonuclease that specifically degrades the RNA of RNA-DNA hybrids. The chain is Ribonuclease H from Symbiobacterium thermophilum (strain DSM 24528 / JCM 14929 / IAM 14863 / T).